The primary structure comprises 163 residues: 3-isopropylmalate dehydratase small subunit 2 (163 aa).

The protein belongs to the LeuD family. LeuD type 2 subfamily. In terms of assembly, heterodimer of LeuC and LeuD.

The enzyme catalyses (2R,3S)-3-isopropylmalate = (2S)-2-isopropylmalate. It functions in the pathway amino-acid biosynthesis; L-leucine biosynthesis; L-leucine from 3-methyl-2-oxobutanoate: step 2/4. Catalyzes the isomerization between 2-isopropylmalate and 3-isopropylmalate, via the formation of 2-isopropylmaleate. This is 3-isopropylmalate dehydratase small subunit 2 (leuD2) from Pyrococcus abyssi (strain GE5 / Orsay).